Reading from the N-terminus, the 118-residue chain is Co-chaperonin GroES (118 aa).

This sequence belongs to the GroES chaperonin family. In terms of assembly, heptamer of 7 subunits arranged in a ring. Interacts with the chaperonin GroEL.

It localises to the cytoplasm. In terms of biological role, together with the chaperonin GroEL, plays an essential role in assisting protein folding. The GroEL-GroES system forms a nano-cage that allows encapsulation of the non-native substrate proteins and provides a physical environment optimized to promote and accelerate protein folding. GroES binds to the apical surface of the GroEL ring, thereby capping the opening of the GroEL channel. The chain is Co-chaperonin GroES from Helicobacter acinonychis (strain Sheeba).